We begin with the raw amino-acid sequence, 452 residues long: UDP-N-acetylmuramoylalanine--D-glutamate ligase (452 aa).

119 to 125 (GSNGKTT) is an ATP binding site.

This sequence belongs to the MurCDEF family.

The protein resides in the cytoplasm. The enzyme catalyses UDP-N-acetyl-alpha-D-muramoyl-L-alanine + D-glutamate + ATP = UDP-N-acetyl-alpha-D-muramoyl-L-alanyl-D-glutamate + ADP + phosphate + H(+). It participates in cell wall biogenesis; peptidoglycan biosynthesis. Functionally, cell wall formation. Catalyzes the addition of glutamate to the nucleotide precursor UDP-N-acetylmuramoyl-L-alanine (UMA). The chain is UDP-N-acetylmuramoylalanine--D-glutamate ligase from Streptococcus pyogenes serotype M2 (strain MGAS10270).